A 1818-amino-acid chain; its full sequence is Protein encore (1818 aa).

Disordered regions lie at residues 47-68 (ANSS…GVSG), 123-282 (SAAG…NSSN), and 317-413 (AERH…GFIS). Residues 52 to 66 (VGSGSGPGPGSGAGV) show a composition bias toward gly residues. Residues 124–137 (AAGSSNLGRQNSFG) are compositionally biased toward polar residues. Residues 141 to 152 (GNMKGKHLTRSH) show a composition bias toward basic residues. Composition is skewed to low complexity over residues 156–179 (ESTS…QLQG), 186–199 (NNNN…AQSA), 217–233 (QQPQ…QQSV), and 266–282 (NSNG…NSSN). Phosphoserine is present on residues Ser-267 and Ser-270. Residues 317 to 328 (AERHDRHERHEM) show a composition bias toward basic and acidic residues. Ser-336 carries the phosphoserine modification. The segment covering 338–348 (NHDEEPYHYEP) has biased composition (basic and acidic residues). 2 stretches are compositionally biased toward low complexity: residues 372 to 381 (NLGGSSSGSI) and 391 to 410 (NCNN…NTSG). In terms of domain architecture, R3H spans 444-508 (RNILLKIEKD…QCVIVAVAKN (65 aa)). The region spanning 510–576 (RIPEIRFQSL…ARSRIFSRTG (67 aa)) is the SUZ domain. The residue at position 535 (Ser-535) is a Phosphoserine. Residues 557–568 (FEEREEDYDRAR) are compositionally biased toward basic and acidic residues. 6 disordered regions span residues 557–806 (FEER…SYEQ), 885–916 (QEQE…SQTP), 936–959 (PYSQ…EEPK), 1176–1249 (GQAP…YNPS), 1332–1648 (AAAG…LVSH), and 1684–1709 (GAGA…RSHI). Residues 592–606 (YGGWEQQQQQQKQSQ) are compositionally biased toward low complexity. Residues 644 to 655 (NYGGPPSSGGPG) are compositionally biased toward gly residues. Over residues 678–695 (QDSTGSTPWRLSPSSSGS) the composition is skewed to polar residues. Over residues 713-771 (SGNQYQSQNQGNSSSGGYNNYRKSSPHQQQQSQQQQQSQQHHQQQLQQPQQLHQQSSQQ) the composition is skewed to low complexity. The segment covering 772–784 (YATTELSCSSTES) has biased composition (polar residues). Positions 893-904 (AGPSSSGSATSS) are enriched in low complexity. Residues 1176-1197 (GQAPMQQQAPHTGAGTTTGPPT) are compositionally biased toward low complexity. Residues 1220 to 1231 (SSNGSVVTSSAY) are compositionally biased toward polar residues. Residues 1381 to 1392 (ASQSAPSTPAAP) show a composition bias toward low complexity. Polar residues predominate over residues 1430–1443 (TPHYYQGQNSNEGY). Low complexity predominate over residues 1503-1521 (ASPSSVSLGGASSSGGANS). 2 stretches are compositionally biased toward polar residues: residues 1554–1565 (AANSSPGVSSYE) and 1579–1596 (FRSQ…VSQR). The span at 1608–1633 (SHESSNNSPNSIVGSQSNSAANTPNA) shows a compositional bias: low complexity. The span at 1684–1705 (GAGASGAAGSNGGHQPGGGGGA) shows a compositional bias: gly residues.

Interacts with hfp; however, given the nuclear localization of hfp, the relevance of such interaction is unclear. Interacts with CycE, Cul1, and the SCF-proteasome complex. In terms of tissue distribution, expressed in all germline cells of the germarium including the stem cells and dividing cystocytes.

It localises to the cytoplasm. In terms of biological role, required for the regulation of germline mitosis, karyosome formation, and establishment of dorsoventral (DS) polarity of the egg and embryo. Involved in proper grk mRNA localization and translation in the oocyte. May control germline mitosis by facilitating the cyclin E (CycE) proteolysis by the SCF-ubiquitin-proteasome complex. The protein is Protein encore (enc) of Drosophila melanogaster (Fruit fly).